The sequence spans 322 residues: Undecaprenyl-phosphate 4-deoxy-4-formamido-L-arabinose transferase (322 aa).

Topologically, residues 1–235 are cytoplasmic; that stretch reads MFEIHPVKKV…TCLTTTPLRM (235 aa). The helical transmembrane segment at 236 to 256 threads the bilayer; it reads LSLLGSIIAIGGFSIAVLLVI. The Periplasmic portion of the chain corresponds to 257–269; the sequence is LRLTFGPQWAAEG. A helical transmembrane segment spans residues 270–290; sequence VFMLFAVLFTFIGAQFIGMGL. The Cytoplasmic segment spans residues 291-322; the sequence is LGEYIGRIYTDVRARPRYFVQQVIRPSSKENE.

The protein belongs to the glycosyltransferase 2 family.

The protein localises to the cell inner membrane. The catalysed reaction is UDP-4-deoxy-4-formamido-beta-L-arabinose + di-trans,octa-cis-undecaprenyl phosphate = 4-deoxy-4-formamido-alpha-L-arabinopyranosyl di-trans,octa-cis-undecaprenyl phosphate + UDP. The protein operates within glycolipid biosynthesis; 4-amino-4-deoxy-alpha-L-arabinose undecaprenyl phosphate biosynthesis; 4-amino-4-deoxy-alpha-L-arabinose undecaprenyl phosphate from UDP-4-deoxy-4-formamido-beta-L-arabinose and undecaprenyl phosphate: step 1/2. Its pathway is bacterial outer membrane biogenesis; lipopolysaccharide biosynthesis. Catalyzes the transfer of 4-deoxy-4-formamido-L-arabinose from UDP to undecaprenyl phosphate. The modified arabinose is attached to lipid A and is required for resistance to polymyxin and cationic antimicrobial peptides. In Escherichia coli O45:K1 (strain S88 / ExPEC), this protein is Undecaprenyl-phosphate 4-deoxy-4-formamido-L-arabinose transferase.